A 129-amino-acid polypeptide reads, in one-letter code: Snaclec coagulation factor IX/factor X-binding protein subunit B3 (129 aa).

The first 8 residues, 1 to 8 (LSLSGTAA), serve as a signal peptide directing secretion. 3 disulfides stabilise this stretch: Cys10/Cys21, Cys38/Cys127, and Cys104/Cys119. In terms of domain architecture, C-type lectin spans 17–128 (YEGHCYKPFN…CRMMANFVCE (112 aa)).

The protein belongs to the snaclec family. As to quaternary structure, heterodimer of subunits A and B3; disulfide-linked. Expressed by the venom gland.

The protein localises to the secreted. In terms of biological role, anticoagulant protein which binds to the gamma-carboxyglutamic acid-domain regions of factors IX (F9) and factor X (F10) in the presence of calcium with a 1 to 1 stoichiometry. This is Snaclec coagulation factor IX/factor X-binding protein subunit B3 from Trimeresurus stejnegeri (Chinese green tree viper).